The following is a 260-amino-acid chain: 3'-5' ssDNA/RNA exonuclease TatD (260 aa).

E92, H128, and H153 together coordinate a divalent metal cation.

It belongs to the metallo-dependent hydrolases superfamily. TatD-type hydrolase family. TatD subfamily. As to quaternary structure, monomer. Mg(2+) serves as cofactor.

The protein resides in the cytoplasm. In terms of biological role, 3'-5' exonuclease that prefers single-stranded DNA and RNA. May play a role in the H(2)O(2)-induced DNA damage repair. This chain is 3'-5' ssDNA/RNA exonuclease TatD, found in Pantoea ananatis (strain LMG 20103).